We begin with the raw amino-acid sequence, 250 residues long: Acyl-coenzyme A diphosphatase fit1 (250 aa).

Over 1–23 (MTEKTASHYWNEETSILKLRRKD) the chain is Cytoplasmic. A helical membrane pass occupies residues 24–44 (ILLFEIYATTLLLGSIYSIYV). Residues 45–58 (DKWSITSYFGNSKN) are Lumenal-facing. A helical transmembrane segment spans residues 59-79 (LINLIFVKRGWFWTSLVYFYH). The Cytoplasmic portion of the chain corresponds to 80–95 (AWDQKRNKIDFKFISR). The helical transmembrane segment at 96-116 (YIVATLWWMFVTQWFIGPGLI) threads the bilayer. At 117 to 160 (DRTFALSGGSCKNFDGDSSVFIPLTASTCKGLNGSWSGGHDLSG) the chain is on the lumenal side. An N-linked (GlcNAc...) asparagine glycan is attached at N149. H161 is a catalytic residue. Residues 161–181 (HVFLLTHSSLFMLSENFSFIL) form a helical membrane-spanning segment. The Cytoplasmic segment spans residues 182-191 (NNGIKATSTK). The chain crosses the membrane as a helical span at residues 192-212 (VLFGLLGLWWWMLFVTASFYH). Residue H212 is part of the active site. T213 is a topological domain (lumenal). The chain crosses the membrane as a helical span at residues 214–234 (TFEKCTGFFSGILEWSIVYVF). The Cytoplasmic segment spans residues 235-250 (SSRMPAVADLLGSSDY).

It belongs to the FIT family. Fungal FIT2B/SCS3 subfamily.

It localises to the endoplasmic reticulum membrane. The catalysed reaction is an acyl-CoA + H2O = an acyl-4'-phosphopantetheine + adenosine 3',5'-bisphosphate + 2 H(+). The enzyme catalyses (9Z)-octadecenoyl-CoA + H2O = S-(9Z-octadecenoyl)-4'-phosphopantetheine + adenosine 3',5'-bisphosphate + 2 H(+). It carries out the reaction (5Z,8Z,11Z,14Z)-eicosatetraenoyl-CoA + H2O = S-(5Z,8Z,11Z,14Z-eicosatetraenoyl)-4'-phosphopantetheine + adenosine 3',5'-bisphosphate + 2 H(+). It catalyses the reaction hexadecanoyl-CoA + H2O = S-hexadecanoyl-4'-phosphopantetheine + adenosine 3',5'-bisphosphate + 2 H(+). Functionally, fatty acyl-coenzyme A (CoA) diphosphatase that hydrolyzes fatty acyl-CoA to yield acyl-4'-phosphopantetheine and adenosine 3',5'-bisphosphate. Preferentially hydrolyzes unsaturated long-chain acyl-CoA substrates in the endoplasmic reticulum (ER) lumen. This catalytic activity is required for maintaining ER structure and for lipid droplets (LDs) biogenesis, which are lipid storage organelles involved in maintaining lipid and energy homeostasis. May directly bind to diacylglycerol (DAGs) and triacylglycerol, which is also important for LD biogenesis. May support directional budding of nacent LDs from the ER into the cytosol by reducing DAG levels at sites of LD formation. May play a role in the regulation of cell morphology and cytoskeletal organization. The polypeptide is Acyl-coenzyme A diphosphatase fit1 (Schizosaccharomyces pombe (strain 972 / ATCC 24843) (Fission yeast)).